The sequence spans 283 residues: Shikimate dehydrogenase (NADP(+)) (283 aa).

Shikimate is bound by residues 16 to 18 (SLS) and T63. Catalysis depends on K67, which acts as the Proton acceptor. Residue D79 coordinates NADP(+). Shikimate contacts are provided by N88 and D103. NADP(+)-binding positions include 128 to 132 (GAGGA), A223, and G243.

The protein belongs to the shikimate dehydrogenase family. Homodimer.

The catalysed reaction is shikimate + NADP(+) = 3-dehydroshikimate + NADPH + H(+). It participates in metabolic intermediate biosynthesis; chorismate biosynthesis; chorismate from D-erythrose 4-phosphate and phosphoenolpyruvate: step 4/7. Involved in the biosynthesis of the chorismate, which leads to the biosynthesis of aromatic amino acids. Catalyzes the reversible NADPH linked reduction of 3-dehydroshikimate (DHSA) to yield shikimate (SA). This Xanthomonas campestris pv. campestris (strain B100) protein is Shikimate dehydrogenase (NADP(+)).